Consider the following 647-residue polypeptide: Indolepyruvate oxidoreductase subunit IorA (647 aa).

4Fe-4S ferredoxin-type domains lie at 585-614 and 616-645; these read PIYHVVEDKCTGCKICINAYGCPAIYWDPE and KKAKVDPTMCWGCGGCAQVCPFDAFEPMKE. 8 residues coordinate [4Fe-4S] cluster: cysteine 594, cysteine 597, cysteine 600, cysteine 606, cysteine 625, cysteine 628, cysteine 631, and cysteine 635.

In terms of assembly, heterodimer of the IorA and IorB subunits. Requires [4Fe-4S] cluster as cofactor.

It catalyses the reaction indole-3-pyruvate + 2 oxidized [2Fe-2S]-[ferredoxin] + CoA = (indol-3-yl)acetyl-CoA + 2 reduced [2Fe-2S]-[ferredoxin] + CO2 + H(+). Functionally, catalyzes the ferredoxin-dependent oxidative decarboxylation of arylpyruvates. This chain is Indolepyruvate oxidoreductase subunit IorA (iorA), found in Thermococcus kodakarensis (strain ATCC BAA-918 / JCM 12380 / KOD1) (Pyrococcus kodakaraensis (strain KOD1)).